We begin with the raw amino-acid sequence, 499 residues long: tRNA (guanine(37)-N(1))-methyltransferase (499 aa).

A mitochondrion-targeting transit peptide spans 1-44 (MKIALPVFQKFNRLISSCKMSGVFPYNPPVNRQMRELDRSFFIT). S-adenosyl-L-methionine contacts are provided by residues histidine 268, 307 to 308 (DL), 335 to 336 (DG), and asparagine 399.

This sequence belongs to the class I-like SAM-binding methyltransferase superfamily. TRM5/TYW2 family. Monomer.

The protein localises to the mitochondrion matrix. Its subcellular location is the nucleus. It localises to the cytoplasm. The enzyme catalyses guanosine(37) in tRNA + S-adenosyl-L-methionine = N(1)-methylguanosine(37) in tRNA + S-adenosyl-L-homocysteine + H(+). In terms of biological role, specifically methylates the N1 position of guanosine-37 in various cytoplasmic and mitochondrial tRNAs. Methylation is not dependent on the nature of the nucleoside 5' of the target nucleoside. This is the first step in the biosynthesis of wybutosine (yW), a modified base adjacent to the anticodon of tRNAs and required for accurate decoding. Postspliced cytoplasmic tRNAs are imported into the nucleus, where this first step seems to take place, after which they are reexported to the cytoplasm, where the yW sythesis is completed by cytoplasmic enzymes. This Saccharomyces cerevisiae (strain ATCC 204508 / S288c) (Baker's yeast) protein is tRNA (guanine(37)-N(1))-methyltransferase.